The following is a 167-amino-acid chain: Small ribosomal subunit protein uS5 (167 aa).

The 64-residue stretch at 12-75 folds into the S5 DRBM domain; sequence IEDRVVAINR…ETARKSLIEV (64 aa).

This sequence belongs to the universal ribosomal protein uS5 family. In terms of assembly, part of the 30S ribosomal subunit. Contacts proteins S4 and S8.

With S4 and S12 plays an important role in translational accuracy. Its function is as follows. Located at the back of the 30S subunit body where it stabilizes the conformation of the head with respect to the body. In Pediococcus pentosaceus (strain ATCC 25745 / CCUG 21536 / LMG 10740 / 183-1w), this protein is Small ribosomal subunit protein uS5.